The sequence spans 651 residues: Beta-glucuronidase (651 aa).

An N-terminal signal peptide occupies residues 1-22 (MSRGPAGAWVALGPLLWTCGLA). N-linked (GlcNAc...) asparagine glycosylation is found at Asn172 and Asn419. Catalysis depends on Glu450, which acts as the Proton donor. A glycan (N-linked (GlcNAc...) asparagine) is linked at Asn630.

This sequence belongs to the glycosyl hydrolase 2 family. Homotetramer.

The protein resides in the lysosome. It carries out the reaction a beta-D-glucuronoside + H2O = D-glucuronate + an alcohol. Inhibited by L-aspartic acid. In terms of biological role, plays an important role in the degradation of dermatan and keratan sulfates. This is Beta-glucuronidase (GUSB) from Canis lupus familiaris (Dog).